We begin with the raw amino-acid sequence, 39 residues long: Omega-theraphotoxin-Asp1a (39 aa).

Disulfide bonds link Cys-4/Cys-25, Cys-8/Cys-31, and Cys-17/Cys-36.

As to expression, expressed by the venom gland.

It localises to the secreted. Its function is as follows. Toxin that inhibits voltage-gated calcium channels in rat cerebellar granule cells (IC(50)&lt;200 nM). Is lethal to cockroaches. In Aphonopelma sp. (American tarantula), this protein is Omega-theraphotoxin-Asp1a.